The following is a 163-amino-acid chain: E1B protein, small T-antigen (163 aa).

Belongs to the adenoviridae E1B 19 kDa protein family.

It is found in the host cell membrane. Its subcellular location is the host nucleus envelope. The protein localises to the host nucleus lamina. In terms of biological role, putative adenovirus Bcl-2 homolog that inhibits apoptosis induced by TNF or FAS pathways, as well as p53-mediated apoptosis. Without E1B 19K function, virus production is compromised because of premature death of host cell. Interacts with Bax protein in cell lysates. The protein is E1B protein, small T-antigen of Human adenovirus A serotype 12 (HAdV-12).